We begin with the raw amino-acid sequence, 742 residues long: G2/M phase-specific E3 ubiquitin-protein ligase (742 aa).

A C2HC pre-PHD-type zinc finger spans residues 10–50 (SPPCVLCGWTDNCPEKYGEKRTYVEYNLTLHNYCLLMSSGI). The segment at 78 to 127 (LMCNICRKKGASIGCVAPKCKRSYHFPCGLQKECVFQFMEDFRSYCWEHK) adopts a PHD-type 1 zinc-finger fold. The segment at 142 to 192 (QCTICLDLVEHLPLYSVLRSPCCKNTWFHRECLQYQALSAGIFFFRCAVCN) adopts a PHD-type 2; degenerate zinc-finger fold. The PHD-type 3 zinc finger occupies 236 to 285 (RCLCKNGRDYNKPDSKWEIKRCQSCGSRGTHLACSSIKSWEQNWECVECR). The HECT domain maps to 417-742 (KGFRQRNFRP…IRSTLRGERE (326 aa)).

Its subcellular location is the nucleus. It is found in the nucleolus. It localises to the cytoplasm. It carries out the reaction S-ubiquitinyl-[E2 ubiquitin-conjugating enzyme]-L-cysteine + [acceptor protein]-L-lysine = [E2 ubiquitin-conjugating enzyme]-L-cysteine + N(6)-ubiquitinyl-[acceptor protein]-L-lysine.. It functions in the pathway protein modification; protein ubiquitination. In terms of biological role, E3 ubiquitin-protein ligase which accepts ubiquitin from an E2 ubiquitin-conjugating enzyme in the form of a thioester and then directly transfers the ubiquitin to targeted substrates. Essential in early embryonic development to prevent apoptotic death. The sequence is that of G2/M phase-specific E3 ubiquitin-protein ligase (G2E3) from Gallus gallus (Chicken).